The primary structure comprises 307 residues: N-acetylmuramic acid 6-phosphate etherase (307 aa).

Residues 62-225 (IVLAFQKGAR…TTASMIRIGK (164 aa)) form the SIS domain. E90 functions as the Proton donor in the catalytic mechanism. E121 is an active-site residue.

Belongs to the GCKR-like family. MurNAc-6-P etherase subfamily. Homodimer.

The catalysed reaction is N-acetyl-D-muramate 6-phosphate + H2O = N-acetyl-D-glucosamine 6-phosphate + (R)-lactate. Its pathway is amino-sugar metabolism; 1,6-anhydro-N-acetylmuramate degradation. The protein operates within amino-sugar metabolism; N-acetylmuramate degradation. It participates in cell wall biogenesis; peptidoglycan recycling. Functionally, specifically catalyzes the cleavage of the D-lactyl ether substituent of MurNAc 6-phosphate, producing GlcNAc 6-phosphate and D-lactate. Together with AnmK, is also required for the utilization of anhydro-N-acetylmuramic acid (anhMurNAc) either imported from the medium or derived from its own cell wall murein, and thus plays a role in cell wall recycling. The protein is N-acetylmuramic acid 6-phosphate etherase of Mesorhizobium japonicum (strain LMG 29417 / CECT 9101 / MAFF 303099) (Mesorhizobium loti (strain MAFF 303099)).